The sequence spans 180 residues: Small ribosomal subunit protein bS16 (180 aa).

The protein belongs to the bacterial ribosomal protein bS16 family.

The chain is Small ribosomal subunit protein bS16 from Flavobacterium psychrophilum (strain ATCC 49511 / DSM 21280 / CIP 103535 / JIP02/86).